The following is a 154-amino-acid chain: MGLSEAEWQLVLHVWAKVEADLSGHGQEILIRLFKGHPETLEKFDKFKHLKSEAEMKASEDLKKHGHTVLTALGGILKKKGHHEAELKPLAQSHATKHKIPIKYLEFISDAIIHVLHSKHPSDFGADAQAAMTKALELFRKDIAAKYKELGFHG.

Positions 2–148 constitute a Globin domain; sequence GLSEAEWQLV…FRKDIAAKYK (147 aa). Serine 4 bears the Phosphoserine mark. Residue histidine 65 participates in nitrite binding. Histidine 65 is an O2 binding site. Threonine 68 bears the Phosphothreonine mark. Histidine 94 is a heme b binding site.

Belongs to the globin family. As to quaternary structure, monomeric.

It is found in the cytoplasm. The protein localises to the sarcoplasm. The catalysed reaction is Fe(III)-heme b-[protein] + nitric oxide + H2O = Fe(II)-heme b-[protein] + nitrite + 2 H(+). The enzyme catalyses H2O2 + AH2 = A + 2 H2O. Monomeric heme protein which primary function is to store oxygen and facilitate its diffusion within muscle tissues. Reversibly binds oxygen through a pentacoordinated heme iron and enables its timely and efficient release as needed during periods of heightened demand. Depending on the oxidative conditions of tissues and cells, and in addition to its ability to bind oxygen, it also has a nitrite reductase activity whereby it regulates the production of bioactive nitric oxide. Under stress conditions, like hypoxia and anoxia, it also protects cells against reactive oxygen species thanks to its pseudoperoxidase activity. The chain is Myoglobin (MB) from Indopacetus pacificus (Longman's beaked whale).